The chain runs to 127 residues: Apolipoprotein C-IV (127 aa).

A signal peptide spans 1–27; sequence MSLLRNRLQDLPALCLCVLVLACIGAC.

The protein belongs to the apolipoprotein C4 family.

The protein localises to the secreted. In terms of biological role, may participate in lipoprotein metabolism. This Papio anubis (Olive baboon) protein is Apolipoprotein C-IV (APOC4).